A 323-amino-acid chain; its full sequence is Acetyl esterase (323 aa).

An Involved in the stabilization of the negatively charged intermediate by the formation of the oxyanion hole motif is present at residues 91 to 93; sequence HGG. Catalysis depends on residues serine 165, aspartate 262, and histidine 292.

This sequence belongs to the 'GDXG' lipolytic enzyme family. Homodimer. Interacts with MalT and MelA.

Its subcellular location is the cytoplasm. Its function is as follows. Displays esterase activity towards short chain fatty esters (acyl chain length of up to 8 carbons). Able to hydrolyze triacetylglycerol (triacetin) and tributyrylglycerol (tributyrin), but not trioleylglycerol (triolein) or cholesterol oleate. Negatively regulates MalT activity by antagonizing maltotriose binding. Inhibits MelA galactosidase activity. The polypeptide is Acetyl esterase (Salmonella typhi).